The primary structure comprises 334 residues: Ornithine carbamoyltransferase (334 aa).

Residues 57–60 (STRT), Arg-108, and 135–138 (HPTQ) each bind carbamoyl phosphate. L-ornithine is bound by residues Asn-168, Asp-232, and 236 to 237 (SM). Residues 274 to 275 (CL) and Arg-321 each bind carbamoyl phosphate.

This sequence belongs to the aspartate/ornithine carbamoyltransferase superfamily. OTCase family.

It localises to the cytoplasm. It catalyses the reaction carbamoyl phosphate + L-ornithine = L-citrulline + phosphate + H(+). It participates in amino-acid biosynthesis; L-arginine biosynthesis; L-arginine from L-ornithine and carbamoyl phosphate: step 1/3. Reversibly catalyzes the transfer of the carbamoyl group from carbamoyl phosphate (CP) to the N(epsilon) atom of ornithine (ORN) to produce L-citrulline. The polypeptide is Ornithine carbamoyltransferase (Cutibacterium acnes (strain DSM 16379 / KPA171202) (Propionibacterium acnes)).